A 280-amino-acid chain; its full sequence is uncharacterized protein (280 aa).

An N-terminal signal peptide occupies residues 1–26 (MNILIKSAVKNFIVFSTALYTSFSFA).

It to E.coli YibQ.

This is an uncharacterized protein from Haemophilus influenzae (strain ATCC 51907 / DSM 11121 / KW20 / Rd).